Consider the following 340-residue polypeptide: Cysteinyl leukotriene receptor 1 (340 aa).

Residues 1–31 (MDETGNPTIPPASNNTCYDSIDDFRNQVYST) are Extracellular-facing. N-linked (GlcNAc...) asparagine glycosylation occurs at Asn-14. Residues 32 to 52 (LYSMISVVGFFGNGFVLYVLV) traverse the membrane as a helical segment. The Cytoplasmic segment spans residues 53 to 60 (KTYHEKSA). Residues 61–81 (FQVYMINLAVADLLCVCTLPL) form a helical membrane-spanning segment. The Extracellular portion of the chain corresponds to 82-109 (RVAYYVHKGIWLFGDFLCRLSTYALYVN). A disulfide bond links Cys-99 and Cys-176. A helical transmembrane segment spans residues 110 to 130 (LYCSIFFMTAMSFFRCVAIVF). Topologically, residues 131–144 (PVQNISLVTQKKAR) are cytoplasmic. The helical transmembrane segment at 145 to 165 (LVCIAIWMFVILTSSPFLMAN) threads the bilayer. Residues 166-196 (TYKDEKNNTKCFEPPQDNQAKNYVLILHYVS) lie on the Extracellular side of the membrane. A glycan (N-linked (GlcNAc...) asparagine) is linked at Asn-172. The chain crosses the membrane as a helical span at residues 197-217 (LFIGFIIPFITIIVCYTMIIF). The Cytoplasmic portion of the chain corresponds to 218–233 (TLLKSSMKKNLSSRKR). Residues 234–254 (AIGMIIVVTAAFLVSFMPYHI) form a helical membrane-spanning segment. At 255–279 (QRTIHLHFLHNKTKPCDSILRMQKS) the chain is on the extracellular side. Asn-265 carries an N-linked (GlcNAc...) asparagine glycan. The chain crosses the membrane as a helical span at residues 280-300 (VVITLSLAASNCCFDPLLYFF). Residues 301–340 (SGGNFRRRLSTIRKYSLSSMTYIPKKKTSLPQKGKDICKE) lie on the Cytoplasmic side of the membrane.

It belongs to the G-protein coupled receptor 1 family.

It localises to the cell membrane. Functionally, receptor for cysteinyl leukotrienes mediating bronchoconstriction of individuals with and without asthma. Stimulation by LTD4 results in the contraction and proliferation of smooth muscle, edema, eosinophil migration and damage to the mucus layer in the lung. This response is mediated via a G-protein that activates a phosphatidylinositol-calcium second messenger system. The polypeptide is Cysteinyl leukotriene receptor 1 (CYSLTR1) (Cavia porcellus (Guinea pig)).